The chain runs to 504 residues: Patatin-like phospholipase domain-containing protein 2 (504 aa).

The Cytoplasmic segment spans residues 1 to 8 (MFPREKTW). Residues 9–29 (NISFAGCGFLGVYYVGVASCL) form a helical membrane-spanning segment. Residues 10-179 (ISFAGCGFLG…SDNLPLYELK (170 aa)) enclose the PNPLA domain. The short motif at 14 to 19 (GCGFLG) is the GXGXXG element. The Extracellular portion of the chain corresponds to 30–42 (REHAPFLVANATH). An N-linked (GlcNAc...) asparagine glycan is attached at Asn39. A helical membrane pass occupies residues 43–63 (IYGASAGALTATALVTGVCLG). Positions 45 to 49 (GASAG) match the GXSXG motif. Catalysis depends on Ser47, which acts as the Nucleophile. The Cytoplasmic segment spans residues 64–137 (EAGAKFIEVS…IISHFNSKDE (74 aa)). Residue Lys92 forms a Glycyl lysine isopeptide (Lys-Gly) (interchain with G-Cter in ubiquitin) linkage. Residues 138 to 158 (LIQANVCSGFIPVYCGLIPPS) traverse the membrane as a helical segment. Topologically, residues 159–329 (LQGVRYVDGG…TTLSNMLPVR (171 aa)) are extracellular. Residue Asp166 is the Proton acceptor of the active site. A DGA/G motif is present at residues 166–168 (DGG). Residues 330-350 (LATAMMVPYTLPLESALSFTI) traverse the membrane as a helical segment. Residues 351–504 (RLLEWLPDVP…ARPVIGALGL (154 aa)) are Cytoplasmic-facing. Residue Ser372 is modified to Phosphoserine; in vitro. Phosphoserine; by PKA and FAM20C is present on Ser404. Position 428 is a phosphoserine (Ser428). Residues 463 to 492 (APADPAPAPADPASPQHQLAGPAPLLSTPA) form a disordered region.

As to quaternary structure, interacts with ABHD5; this association stimulates PNPLA2 triglyceride hydrolase activity. Interacts with SERPINF1; this interaction stimulates the phospholipase A2 activity of PNPLA2. Despite a colocalization in lipid droplets, it probably does not interact with PLIN. Interacts with PLIN5; prevents interaction with ABHD5. Interacts with FAF2. Phosphorylation at Ser-404 by PKA is increased during fasting and moderate intensity exercise, and moderately increases lipolytic activity. Phosphorylation at Ser-404 is increased upon beta-adrenergic stimulation. Post-translationally, ubiquitinated by PEX2 in response to reactive oxygen species (ROS), leading to its degradation. Ubiquitination is stimulated by LDAH. Highest expression in adipose tissue. Also detected in heart, skeletal muscle, and portions of the gastrointestinal tract. Detected in normal retina and retinoblastoma cells. Detected in retinal pigment epithelium and, at lower intensity, in the inner segments of photoreceptors and in the ganglion cell layer of the neural retina (at protein level).

Its subcellular location is the lipid droplet. It is found in the cell membrane. The protein localises to the cytoplasm. The enzyme catalyses a triacylglycerol + H2O = a diacylglycerol + a fatty acid + H(+). It carries out the reaction a triacylglycerol + H2O = a 1,2-diacylglycerol + a fatty acid + H(+). The catalysed reaction is a triacylglycerol + H2O = a 1,3-diacylglycerol + a fatty acid + H(+). It catalyses the reaction a triacyl-sn-glycerol + H2O = a 1,3-diacyl-sn-glycerol + a fatty acid + H(+). The enzyme catalyses a triacyl-sn-glycerol + H2O = a 2,3-diacyl-sn-glycerol + a fatty acid + H(+). It carries out the reaction a 1-acylglycerol + a 1,3-diacylglycerol = a triacylglycerol + glycerol. The catalysed reaction is a 1-acylglycerol + a 1,2-diacylglycerol = a triacylglycerol + glycerol. It catalyses the reaction 2 a 1-acylglycerol = a 1,2-diacylglycerol + glycerol. The enzyme catalyses a triacylglycerol + all-trans-retinol = an all-trans-retinyl ester + a diacylglycerol. It carries out the reaction 1,2-di-(9Z-octadecenoyl)-glycerol + (9Z)-octadecenoate + H(+) = 1,2,3-tri-(9Z-octadecenoyl)-glycerol + H2O. The catalysed reaction is 1,2,3-tri-(9Z-octadecenoyl)-glycerol + H2O = 1,3-di-(9Z-octadecenoyl)-glycerol + (9Z)-octadecenoate + H(+). It catalyses the reaction 1-(9Z-octadecenoyl)-glycerol + 1,3-di-(9Z-octadecenoyl)-glycerol = 1,2,3-tri-(9Z-octadecenoyl)-glycerol + glycerol. The enzyme catalyses 1-(9Z-octadecenoyl)-glycerol + 1,2-di-(9Z-octadecenoyl)-glycerol = 1,2,3-tri-(9Z-octadecenoyl)-glycerol + glycerol. It carries out the reaction 2 1-(9Z-octadecenoyl)-glycerol = 1,2-di-(9Z-octadecenoyl)-glycerol + glycerol. The catalysed reaction is 1,2,3-tri-(9Z-octadecenoyl)-glycerol + all-trans-retinol = all-trans-retinyl 9Z-octadecenoate + di-(9Z)-octadecenoylglycerol. It catalyses the reaction 1,2,3-tri-(9Z)-hexadecenoylglycerol + H2O = 1,3-di-(9Z)-hexadecenoylglycerol + (9Z)-hexadecenoate + H(+). The enzyme catalyses 1,2,3-tri-(9Z,12Z)-octadecadienoylglycerol + H2O = 1,3-di-(9Z,12Z)-octadecadienoylglycerol + (9Z,12Z)-octadecadienoate + H(+). It carries out the reaction 1,2,3-tri-(9Z,12Z,15Z)-octadecatrienoylglycerol + H2O = 1,3-di-(9Z,12Z,15Z)-octadecatrienoylglycerol + (9Z,12Z,15Z)-octadecatrienoate + H(+). The catalysed reaction is 1,3-di-(9Z)-octadecenoyl-2-hexadecanoylglycerol + H2O = 1,3-di-(9Z-octadecenoyl)-glycerol + hexadecanoate + H(+). It catalyses the reaction 1,2-di-(9Z)-octadecenoyl-3-hexadecanoyl-sn-glycerol + H2O = 1-(9Z)-octadecenoyl-3-hexadecanoyl-sn-glycerol + (9Z)-octadecenoate + H(+). The enzyme catalyses 1-hexadecanoyl-2,3-di-(9Z)-octadecenoyl-sn-glycerol + H2O = 1-hexadecanoyl-3-(9Z)-octadecenoyl-sn-glycerol + (9Z)-octadecenoate + H(+). It carries out the reaction 1,2,3-tri-(9Z-octadecenoyl)-glycerol + H2O = 2,3-di-(9Z)-octadecenoyl-sn-glycerol + (9Z)-octadecenoate + H(+). The catalysed reaction is 1,2,3-tri-(9Z)-hexadecenoylglycerol + H2O = 2,3-di-(9Z)-hexadecenoyl-sn-glycerol + (9Z)-hexadecenoate + H(+). It catalyses the reaction 1,2,3-tri-(9Z,12Z)-octadecadienoylglycerol + H2O = 2,3-di-(9Z,12Z)-octadecadienoyl-sn-glycerol + (9Z,12Z)-octadecadienoate + H(+). The enzyme catalyses 1,2,3-tri-(9Z,12Z,15Z)-octadecatrienoylglycerol + H2O = 2,3-di-(9Z,12Z,15Z)-octadecatrienoyl-sn-glycerol + (9Z,12Z,15Z)-octadecatrienoate + H(+). It carries out the reaction 1,3-di-(9Z)-octadecenoyl-2-hexadecanoylglycerol + H2O = 2-hexadecanoyl-3-(9Z)-octadecenoyl-sn-glycerol + (9Z)-octadecenoate + H(+). The catalysed reaction is 1-hexadecanoyl-2,3-di-(9Z)-octadecenoyl-sn-glycerol + H2O = 2,3-di-(9Z)-octadecenoyl-sn-glycerol + hexadecanoate + H(+). It catalyses the reaction 1,2-di-(9Z)-octadecenoyl-3-hexadecanoyl-sn-glycerol + H2O = 2-(9Z-octadecenoyl)-3-hexadecanoyl-sn-glycerol + (9Z)-octadecenoate + H(+). The enzyme catalyses a 1,2-diacyl-sn-glycero-3-phosphocholine + H2O = a 1-acyl-sn-glycero-3-phosphocholine + a fatty acid + H(+). It carries out the reaction 1,2,3-tri-(9Z-octadecenoyl)-glycerol + 9-hydroxy-octadecanoate = 9-(9Z-octadecenoyloxy)-octadecanoate + 2,3-di-(9Z)-octadecenoyl-sn-glycerol. The catalysed reaction is 1-hexadecanoyl-2,3-di-(9Z)-octadecenoyl-sn-glycerol + 9-hydroxy-octadecanoate = 9-hexadecanoyloxy-octadecanoate + 2,3-di-(9Z)-octadecenoyl-sn-glycerol. It catalyses the reaction 1,2,3-tri-(10Z)-heptadecenoylglycerol + 9-hydroxy-octadecanoate = 2,3-di-(10Z-heptadecenoyl)-sn-glycerol + 9-(10Z-heptadecenoyloxy)-octadecanoate. The enzyme catalyses 1,2,3-tri-(9Z,12Z)-octadecadienoylglycerol + 9-hydroxy-octadecanoate = 2,3-di-(9Z,12Z)-octadecadienoyl-sn-glycerol + 9-(9Z,12Z-octadecadienoyloxy)-octadecanoate. It carries out the reaction 1,2,3-tri-(9Z)-hexadecenoylglycerol + 9-hydroxy-octadecanoate = 2,3-di-(9Z)-hexadecenoyl-sn-glycerol + 9-(9Z-hexadecenoyloxy)-octadecanoate. The catalysed reaction is 9-hydroxy-octadecanoate + 1,2-di-(9Z-octadecenoyl)-sn-glycerol = 9-(9Z-octadecenoyloxy)-octadecanoate + 2-(9Z-octadecenoyl)-glycerol. It catalyses the reaction 1-hexadecanoyl-2,3-di-(9Z)-octadecenoyl-sn-glycerol + 9-hydroxy-octadecanoate = 1-hexadecanoyl-3-(9Z)-octadecenoyl-sn-glycerol + 9-(9Z-octadecenoyloxy)-octadecanoate. It functions in the pathway glycerolipid metabolism; triacylglycerol degradation. The triglyceride lipase activity is inhibited by BEL ((E)-6-(bromomethylene)-3-(1-naphthalenyl)-2H-tetrahydropyran-2-one), a suicide substrate inhibitor. No differences in the acylglycerol transacylase was detected in the presence or absence of ATP. Functionally, catalyzes the initial step in triglyceride hydrolysis in adipocyte and non-adipocyte lipid droplets. Exhibits a strong preference for the hydrolysis of long-chain fatty acid esters at the sn-2 position of the glycerol backbone and acts coordinately with LIPE/HLS and DGAT2 within the lipolytic cascade. Also possesses acylglycerol transacylase and phospholipase A2 activities. Transfers fatty acid from triglyceride to retinol, hydrolyzes retinylesters, and generates 1,3-diacylglycerol from triglycerides. Regulates adiposome size and may be involved in the degradation of adiposomes. Catalyzes the formation of an ester bond between hydroxy fatty acids and fatty acids derived from triglycerides or diglycerides to generate fatty acid esters of hydroxy fatty acids (FAHFAs) in adipocytes. Acts antagonistically with LDAH in regulation of cellular lipid stores. Inhibits LDAH-stimulated lipid droplet fusion. May play an important role in energy homeostasis. May play a role in the response of the organism to starvation, enhancing hydrolysis of triglycerides and providing free fatty acids to other tissues to be oxidized in situations of energy depletion. The sequence is that of Patatin-like phospholipase domain-containing protein 2 from Homo sapiens (Human).